The following is a 1331-amino-acid chain: Contactin-associated protein-like 2 (1331 aa).

An N-terminal signal peptide occupies residues 1–27 (MLAAPRAGCGAALLLWIVSSCLCRAWT). Over 28-1262 (APSTSQKCDE…IRNGVNRNSA (1235 aa)) the chain is Extracellular. In terms of domain architecture, F5/8 type C spans 35–181 (CDEPLVSGLP…IGLRIEVYGC (147 aa)). A disulfide bridge connects residues Cys-35 and Cys-181. Laminin G-like domains follow at residues 187–368 (VINF…SFSC) and 373–552 (TVPV…IDMC). 8 N-linked (GlcNAc...) asparagine glycosylation sites follow: Asn-289, Asn-346, Asn-363, Asn-379, Asn-436, Asn-506, Asn-507, and Asn-546. A disulfide bond links Cys-336 and Cys-368. Intrachain disulfides connect Cys-520–Cys-552, Cys-558–Cys-569, Cys-563–Cys-578, and Cys-580–Cys-590. The EGF-like 1 domain occupies 554–591 (IIDRCVPNHCERGGKCSQTWDSFKCTCDETGYTGATCH). The 207-residue stretch at 592 to 798 (NSIYEPSCEA…LRCQGDRNYW (207 aa)) folds into the Fibrinogen C-terminal domain. Asn-630 and Asn-735 each carry an N-linked (GlcNAc...) asparagine glycan. Positions 799 to 963 (NAASFPNPSS…KVTSGFISGC (165 aa)) constitute a Laminin G-like 3 domain. 4 disulfide bridges follow: Cys-936–Cys-963, Cys-967–Cys-980, Cys-974–Cys-989, and Cys-991–Cys-1001. In terms of domain architecture, EGF-like 2 spans 964–1002 (SGHCTSYGTNCENGGKCLERYHGYSCDCSNTAYDGTFCN). Residues 1023–1214 (ATNARDSSSR…IQGELVESNC (192 aa)) form the Laminin G-like 4 domain. N-linked (GlcNAc...) asparagine glycosylation is found at Asn-1116 and Asn-1198. Cys-1178 and Cys-1214 are disulfide-bonded. Residues 1263–1283 (IIGGVIAVVIFTILCTLVFLI) form a helical membrane-spanning segment. At 1284–1331 (RYMFRHKGTYHTNEAKGAESAESADAAIMNNDPNFTETIDESKKEWLI) the chain is on the cytoplasmic side. A phosphoserine mark is found at Ser-1303 and Ser-1306.

The protein belongs to the neurexin family. As to quaternary structure, interacts (via C-terminus) with KCNA2.

The protein resides in the membrane. It is found in the cell projection. Its subcellular location is the axon. The protein localises to the cell junction. It localises to the paranodal septate junction. Required for gap junction formation. Required, with CNTNAP1, for radial and longitudinal organization of myelinated axons. Plays a role in the formation of functional distinct domains critical for saltatory conduction of nerve impulses in myelinated nerve fibers. Demarcates the juxtaparanodal region of the axo-glial junction. This Pongo abelii (Sumatran orangutan) protein is Contactin-associated protein-like 2 (CNTNAP2).